The chain runs to 59 residues: Large ribosomal subunit protein uL30 (59 aa).

Belongs to the universal ribosomal protein uL30 family. In terms of assembly, part of the 50S ribosomal subunit.

The chain is Large ribosomal subunit protein uL30 from Enterobacter sp. (strain 638).